Reading from the N-terminus, the 61-residue chain is Small ribosomal subunit protein uS14 (61 aa).

Residues cysteine 24, cysteine 27, cysteine 40, and cysteine 43 each contribute to the Zn(2+) site.

The protein belongs to the universal ribosomal protein uS14 family. Zinc-binding uS14 subfamily. In terms of assembly, part of the 30S ribosomal subunit. Contacts proteins S3 and S10. Zn(2+) serves as cofactor.

Functionally, binds 16S rRNA, required for the assembly of 30S particles and may also be responsible for determining the conformation of the 16S rRNA at the A site. This chain is Small ribosomal subunit protein uS14, found in Malacoplasma penetrans (strain HF-2) (Mycoplasma penetrans).